The following is an 832-amino-acid chain: Alpha-glucan phosphorylase, H isozyme (832 aa).

An N6-(pyridoxal phosphate)lysine modification is found at Lys-678.

Belongs to the glycogen phosphorylase family. Pyridoxal 5'-phosphate serves as cofactor.

It localises to the cytoplasm. It carries out the reaction [(1-&gt;4)-alpha-D-glucosyl](n) + phosphate = [(1-&gt;4)-alpha-D-glucosyl](n-1) + alpha-D-glucose 1-phosphate. Its function is as follows. Phosphorylase is an important allosteric enzyme in carbohydrate metabolism. Enzymes from different sources differ in their regulatory mechanisms and in their natural substrates. However, all known phosphorylases share catalytic and structural properties. The sequence is that of Alpha-glucan phosphorylase, H isozyme from Triticum aestivum (Wheat).